An 858-amino-acid chain; its full sequence is Protein translocase subunit SecA (858 aa).

ATP contacts are provided by residues Q85, 103-107 (GEGKT), and D511. 4 residues coordinate Zn(2+): C840, C842, C851, and C852.

Belongs to the SecA family. As to quaternary structure, monomer and homodimer. Part of the essential Sec protein translocation apparatus which comprises SecA, SecYEG and auxiliary proteins SecDF. Other proteins may also be involved. It depends on Zn(2+) as a cofactor.

The protein localises to the cell membrane. It is found in the cytoplasm. The catalysed reaction is ATP + H2O + cellular proteinSide 1 = ADP + phosphate + cellular proteinSide 2.. In terms of biological role, part of the Sec protein translocase complex. Interacts with the SecYEG preprotein conducting channel. Has a central role in coupling the hydrolysis of ATP to the transfer of proteins into and across the cell membrane, serving as an ATP-driven molecular motor driving the stepwise translocation of polypeptide chains across the membrane. The polypeptide is Protein translocase subunit SecA (Lachnoclostridium phytofermentans (strain ATCC 700394 / DSM 18823 / ISDg) (Clostridium phytofermentans)).